An 82-amino-acid polypeptide reads, in one-letter code: Small ribosomal subunit protein bS16c (82 aa).

It belongs to the bacterial ribosomal protein bS16 family.

Its subcellular location is the plastid. The protein localises to the chloroplast. The polypeptide is Small ribosomal subunit protein bS16c (Pyropia yezoensis (Susabi-nori)).